Reading from the N-terminus, the 268-residue chain is Tryptophan synthase alpha chain (268 aa).

Residues E49 and D60 each act as proton acceptor in the active site.

This sequence belongs to the TrpA family. Tetramer of two alpha and two beta chains.

The enzyme catalyses (1S,2R)-1-C-(indol-3-yl)glycerol 3-phosphate + L-serine = D-glyceraldehyde 3-phosphate + L-tryptophan + H2O. The protein operates within amino-acid biosynthesis; L-tryptophan biosynthesis; L-tryptophan from chorismate: step 5/5. Its function is as follows. The alpha subunit is responsible for the aldol cleavage of indoleglycerol phosphate to indole and glyceraldehyde 3-phosphate. The chain is Tryptophan synthase alpha chain from Yersinia enterocolitica serotype O:8 / biotype 1B (strain NCTC 13174 / 8081).